Reading from the N-terminus, the 276-residue chain is Cytoskeleton protein RodZ (276 aa).

Residues 1–110 (MTSMRKKTIG…SSKKKKKKTS (110 aa)) are Cytoplasmic-facing. Residues 111 to 131 (FLPLFYFILFALSILIFVTYY) form a helical; Signal-anchor for type II membrane protein membrane-spanning segment. At 132–276 (VWNYIQTQPE…GQITVTFTKN (145 aa)) the chain is on the extracellular side.

It belongs to the RodZ family. Interacts with MltG and MreC in the elongasome. Interacts with KhpB (also called EloR/Jag).

The protein localises to the cell membrane. Cytoskeletal protein that is involved in cell-shape control through regulation of the length of the long axis. Probably part of the elongasome which synthesizes peripheral peptidoglycan. In Streptococcus pneumoniae (strain ATCC BAA-255 / R6), this protein is Cytoskeleton protein RodZ.